A 315-amino-acid chain; its full sequence is DNA-directed RNA polymerase subunit alpha (315 aa).

An alpha N-terminal domain (alpha-NTD) region spans residues 1–228 (MLEIEKPVIQ…EHFKLFMTLT (228 aa)). The tract at residues 245–315 (KEKALEMTIE…LGLNLRLNDE (71 aa)) is alpha C-terminal domain (alpha-CTD).

Belongs to the RNA polymerase alpha chain family. Homodimer. The RNAP catalytic core consists of 2 alpha, 1 beta, 1 beta' and 1 omega subunit. When a sigma factor is associated with the core the holoenzyme is formed, which can initiate transcription.

The catalysed reaction is RNA(n) + a ribonucleoside 5'-triphosphate = RNA(n+1) + diphosphate. Functionally, DNA-dependent RNA polymerase catalyzes the transcription of DNA into RNA using the four ribonucleoside triphosphates as substrates. This Clostridium perfringens (strain ATCC 13124 / DSM 756 / JCM 1290 / NCIMB 6125 / NCTC 8237 / Type A) protein is DNA-directed RNA polymerase subunit alpha.